Reading from the N-terminus, the 171-residue chain is Transcriptional repressor NrdR (171 aa).

A disordered region spans residues 1-21 (MQCPHCQHTDSRVLESRSSEN). A zinc finger spans residues 3–34 (CPHCQHTDSRVLESRSSENGQSIRRRRECLQC). Residues 7-18 (QHTDSRVLESRS) show a composition bias toward basic and acidic residues. The ATP-cone domain occupies 49 to 139 (ITVIKKDGKR…VYGNFQGIRD (91 aa)).

This sequence belongs to the NrdR family. Requires Zn(2+) as cofactor.

Negatively regulates transcription of bacterial ribonucleotide reductase nrd genes and operons by binding to NrdR-boxes. This is Transcriptional repressor NrdR from Microcystis aeruginosa (strain NIES-843 / IAM M-2473).